Reading from the N-terminus, the 186-residue chain is Thymidine kinase (186 aa).

8–15 (GPMYSGKT) serves as a coordination point for ATP. The active-site Proton acceptor is the Glu-86. Residue Phe-118 participates in substrate binding. Zn(2+) is bound by residues Cys-143 and Cys-146. 162–166 (IIEIG) provides a ligand contact to substrate. Zn(2+)-binding residues include Cys-175 and Cys-178.

The protein belongs to the thymidine kinase family.

It carries out the reaction thymidine + ATP = dTMP + ADP + H(+). The chain is Thymidine kinase (TK) from Choristoneura fumiferana (Spruce budworm moth).